Here is a 360-residue protein sequence, read N- to C-terminus: MLVWLAEYLVKFYSGFNVFSYLTFRAIVSLLTALFISLWMGPHLIAWLQKLQIGQVVRNDGPESHFSKRGTPTMGGLMILFSITISVLMWAYPSNPYVWCVLFILIGYGIVGFIDDYRKVVRKNTKGLIARWKYFWQSIIALAAAFTMYSIGKDTSATELVVPFFKDIMPQLGLLYVLLAYFVIVGTSNAVNLTDGLDGLAIMPTVFVAAGFALVAWATGNVNFAAYLHIPYLRHAGELVIVCTAIVGAGLGFLWFNTYPAQVFMGDVGSLALGGALGTIAVLLRQEFLLVIMGGVFVVETLSVILQVGSFKLRGQRIFRMAPIHHHYELKGWPEPRVIVRFWIISLMLVLIGLATLKVR.

10 helical membrane passes run 27-47 (IVSL…LIAW), 72-92 (PTMG…MWAY), 94-114 (SNPY…VGFI), 132-152 (WKYF…YSIG), 168-188 (IMPQ…VGTS), 199-219 (GLAI…AWAT), 236-256 (AGEL…FLWF), 263-283 (VFMG…IAVL), 288-308 (FLLV…ILQV), and 338-358 (VIVR…ATLK).

Belongs to the glycosyltransferase 4 family. MraY subfamily. It depends on Mg(2+) as a cofactor.

It is found in the cell inner membrane. The enzyme catalyses UDP-N-acetyl-alpha-D-muramoyl-L-alanyl-gamma-D-glutamyl-meso-2,6-diaminopimeloyl-D-alanyl-D-alanine + di-trans,octa-cis-undecaprenyl phosphate = di-trans,octa-cis-undecaprenyl diphospho-N-acetyl-alpha-D-muramoyl-L-alanyl-D-glutamyl-meso-2,6-diaminopimeloyl-D-alanyl-D-alanine + UMP. It functions in the pathway cell wall biogenesis; peptidoglycan biosynthesis. Catalyzes the initial step of the lipid cycle reactions in the biosynthesis of the cell wall peptidoglycan: transfers peptidoglycan precursor phospho-MurNAc-pentapeptide from UDP-MurNAc-pentapeptide onto the lipid carrier undecaprenyl phosphate, yielding undecaprenyl-pyrophosphoryl-MurNAc-pentapeptide, known as lipid I. The chain is Phospho-N-acetylmuramoyl-pentapeptide-transferase from Yersinia pseudotuberculosis serotype O:1b (strain IP 31758).